Consider the following 741-residue polypeptide: MESRDHNNPQEGPTSSSGRRAAVEDNHLLIKAVQNEDVDLVQQLLEGGANVNFQEEEGGWTPLHNAVQMSREDIVELLLRHGADPVLRKKNGATPFILAAIAGSVKLLKLFLSKGADVNECDFYGFTAFMEAAVYGKVKALKFLYKRGANVNLRRKTKEDQERLRKGGATALMDAAEKGHVEVLKILLDEMGADVNACDNMGRNALIHALLSSDDSDVEAITHLLLDHGADVNVRGERGKTPLILAVEKKHLGLVQRLLEQEHIEINDTDSDGKTALLLAVELKLKKIAELLCKRGASTDCGDLVMTARRNYDHSLVKVLLSHGAKEDFHPPAEDWKPQSSHWGAALKDLHRIYRPMIGKLKFFIDEKYKIADTSEGGIYLGFYEKQEVAVKTFCEGSPRAQREVSCLQSSRENSHLVTFYGSESHRGHLFVCVTLCEQTLEACLDVHRGEDVENEEDEFARNVLSSIFKAVQELHLSCGYTHQDLQPQNILIDSKKAAHLADFDKSIKWAGDPQEVKRDLEDLGRLVLYVVKKGSISFEDLKAQSNEEVVQLSPDEETKDLIHRLFHPGEHVRDCLSDLLGHPFFWTWESRYRTLRNVGNESDIKTRKSESEILRLLQPGPSEHSKSFDKWTTKINECVMKKMNKFYEKRGNFYQNTVGDLLKFIRNLGEHIDEEKHKKMKLKIGDPSLYFQKTFPDLVIYVYTKLQNTEYRKHFPQTHSPNKPQCDGAGGASGLASPGC.

Residues Met1–Ala21 form a disordered region. Residues Pro9–Gly18 are compositionally biased toward polar residues. ANK repeat units lie at residues Glu24–Phe53, Gly58–Leu87, Asn91–Glu120, Tyr124–Leu153, Gly167–Ala197, Met201–Val234, Arg238–Asp268, Asp272–Cys301, and Asp303–Phe329. 2-5A binding (P-loop) regions lie at residues Gly229 to Pro242 and Gly253 to Thr275. The Protein kinase domain occupies Ile365–Phe586. Residues Cys395–Cys444 form a C6-type; atypical zinc finger. One can recognise a KEN domain in the interval Trp589–Asn723. N6-acetyllysine is present on Lys684. The interval His715–Cys741 is disordered.

This sequence belongs to the protein kinase superfamily. Monomer (inactive form) or homodimer. Interacts with ABCE1; this interaction inhibits the RNASEL. It depends on Mn(2+) as a cofactor. The cofactor is Mg(2+). As to expression, highly expressed in spleen and thymus followed by prostate, testis, uterus, small intestine, colon and peripheral blood leukocytes.

The protein resides in the cytoplasm. It is found in the mitochondrion. After binding to 2-5A (5'-phosphorylated 2',5'-linked oligoadenylates) the homodimerization and subsequent activation occurs. Inhibited by RNASEL inhibitor ABCE1/RLI, a cytoplasmic member of the ATP-binding cassette (ABC) transporter family. In terms of biological role, endoribonuclease that functions in the interferon (IFN) antiviral response. In INF treated and virus infected cells, RNASEL probably mediates its antiviral effects through a combination of direct cleavage of single-stranded viral RNAs, inhibition of protein synthesis through the degradation of rRNA, induction of apoptosis, and induction of other antiviral genes. RNASEL mediated apoptosis is the result of a JNK-dependent stress-response pathway leading to cytochrome c release from mitochondria and caspase-dependent apoptosis. Therefore, activation of RNASEL could lead to elimination of virus infected cells under some circumstances. In the crosstalk between autophagy and apoptosis proposed to induce autophagy as an early stress response to small double-stranded RNA and at later stages of prolonged stress to activate caspase-dependent proteolytic cleavage of BECN1 to terminate autophagy and promote apoptosis. Might play a central role in the regulation of mRNA turnover. Cleaves 3' of UpNp dimers, with preference for UU and UA sequences, to sets of discrete products ranging from between 4 and 22 nucleotides in length. The protein is 2-5A-dependent ribonuclease (RNASEL) of Homo sapiens (Human).